The following is a 316-amino-acid chain: Sulfate adenylyltransferase subunit 2 (316 aa).

The disordered stretch occupies residues 297–316 (RAIDRDQSGSMEKKKREGYF).

Belongs to the PAPS reductase family. CysD subfamily. As to quaternary structure, heterodimer composed of CysD, the smaller subunit, and CysN.

It carries out the reaction sulfate + ATP + H(+) = adenosine 5'-phosphosulfate + diphosphate. Its pathway is sulfur metabolism; hydrogen sulfide biosynthesis; sulfite from sulfate: step 1/3. With CysN forms the ATP sulfurylase (ATPS) that catalyzes the adenylation of sulfate producing adenosine 5'-phosphosulfate (APS) and diphosphate, the first enzymatic step in sulfur assimilation pathway. APS synthesis involves the formation of a high-energy phosphoric-sulfuric acid anhydride bond driven by GTP hydrolysis by CysN coupled to ATP hydrolysis by CysD. The polypeptide is Sulfate adenylyltransferase subunit 2 (Allorhizobium ampelinum (strain ATCC BAA-846 / DSM 112012 / S4) (Agrobacterium vitis (strain S4))).